We begin with the raw amino-acid sequence, 71 residues long: Plasticin-C1 (71 aa).

Residues 1–22 (MAFLKKSLLLVLFLGLVSLSIC) form the signal peptide. The propeptide occupies 23–45 (EEEKRENEDEEKQEDDDQSENKR). Positions 25 to 46 (EKRENEDEEKQEDDDQSENKRG) are disordered. The span at 30 to 40 (EDEEKQEDDDQ) shows a compositional bias: acidic residues. N68 carries the post-translational modification Asparagine amide. Positions 70–71 (ES) are excised as a propeptide.

It belongs to the frog skin active peptide (FSAP) family. Plasticin subfamily. In terms of tissue distribution, expressed by the skin glands.

The protein localises to the secreted. It is found in the target cell membrane. Its function is as follows. Neutral peptide with no antimicrobial activity. May act in synergy with cationic peptides by enhancing their activity. Has a moderate hemolytic activity. The protein is Plasticin-C1 of Agalychnis callidryas (Red-eyed tree frog).